Consider the following 156-residue polypeptide: Transcription antitermination protein NusB (156 aa).

The protein belongs to the NusB family.

Its function is as follows. Involved in transcription antitermination. Required for transcription of ribosomal RNA (rRNA) genes. Binds specifically to the boxA antiterminator sequence of the ribosomal RNA (rrn) operons. This chain is Transcription antitermination protein NusB, found in Rickettsia felis (strain ATCC VR-1525 / URRWXCal2) (Rickettsia azadi).